Here is a 367-residue protein sequence, read N- to C-terminus: Histidinol-phosphate aminotransferase 1 (367 aa).

The residue at position 229 (lysine 229) is an N6-(pyridoxal phosphate)lysine.

It belongs to the class-II pyridoxal-phosphate-dependent aminotransferase family. Histidinol-phosphate aminotransferase subfamily. In terms of assembly, homodimer. The cofactor is pyridoxal 5'-phosphate.

The catalysed reaction is L-histidinol phosphate + 2-oxoglutarate = 3-(imidazol-4-yl)-2-oxopropyl phosphate + L-glutamate. Its pathway is amino-acid biosynthesis; L-histidine biosynthesis; L-histidine from 5-phospho-alpha-D-ribose 1-diphosphate: step 7/9. In Idiomarina loihiensis (strain ATCC BAA-735 / DSM 15497 / L2-TR), this protein is Histidinol-phosphate aminotransferase 1.